We begin with the raw amino-acid sequence, 316 residues long: Ribosomal RNA small subunit methyltransferase H (316 aa).

S-adenosyl-L-methionine-binding positions include 35-37, Asp-55, Tyr-79, Asp-100, and Gln-107; that span reads GGH.

It belongs to the methyltransferase superfamily. RsmH family.

Its subcellular location is the cytoplasm. It catalyses the reaction cytidine(1402) in 16S rRNA + S-adenosyl-L-methionine = N(4)-methylcytidine(1402) in 16S rRNA + S-adenosyl-L-homocysteine + H(+). In terms of biological role, specifically methylates the N4 position of cytidine in position 1402 (C1402) of 16S rRNA. The sequence is that of Ribosomal RNA small subunit methyltransferase H from Nitrosospira multiformis (strain ATCC 25196 / NCIMB 11849 / C 71).